Reading from the N-terminus, the 338-residue chain is Dodecaprenyl-phosphate galacturonate synthase (338 aa).

A run of 2 helical transmembrane segments spans residues 254–274 (FFGS…LYLG) and 289–309 (MLMV…TGIL).

It belongs to the glycosyltransferase 2 family.

The protein localises to the cell membrane. The catalysed reaction is di-trans,nona-cis-dodecaprenyl phosphate + UDP-alpha-D-galacturonate = beta-D-galacturonosyl di-trans,nona-cis-dodecaprenyl phosphate + UDP. Glycosyltransferase that catalyzes the synthesis of dodecaprenyl-phosphate galacturonate (Dod-P-GalA), likely from UDP-GalA and dodecaprenyl-phosphate. Dod-P-GalA is the lipid donor required for GalA transfer to lipopolysaccharide (LPS) specific residues catalyzed by the GalA transferases RgtA, RgtB, RgtC and RgtD. The chain is Dodecaprenyl-phosphate galacturonate synthase from Rhizobium johnstonii (strain DSM 114642 / LMG 32736 / 3841) (Rhizobium leguminosarum bv. viciae).